We begin with the raw amino-acid sequence, 236 residues long: LexA repressor (236 aa).

Residues 26–46 constitute a DNA-binding region (H-T-H motif); the sequence is FDEMKEALDLRSKSGIHRLIT. Catalysis depends on for autocatalytic cleavage activity residues S157 and K195.

Belongs to the peptidase S24 family. As to quaternary structure, homodimer.

The enzyme catalyses Hydrolysis of Ala-|-Gly bond in repressor LexA.. Represses a number of genes involved in the response to DNA damage (SOS response), including recA and lexA. In the presence of single-stranded DNA, RecA interacts with LexA causing an autocatalytic cleavage which disrupts the DNA-binding part of LexA, leading to derepression of the SOS regulon and eventually DNA repair. The chain is LexA repressor from Azorhizobium caulinodans (strain ATCC 43989 / DSM 5975 / JCM 20966 / LMG 6465 / NBRC 14845 / NCIMB 13405 / ORS 571).